The chain runs to 974 residues: Bifunctional glutamine synthetase adenylyltransferase/adenylyl-removing enzyme (974 aa).

Residues Met1 to Gln464 form an adenylyl removase region. The segment at Leu468–His974 is adenylyl transferase.

This sequence belongs to the GlnE family. Mg(2+) serves as cofactor.

It catalyses the reaction [glutamine synthetase]-O(4)-(5'-adenylyl)-L-tyrosine + phosphate = [glutamine synthetase]-L-tyrosine + ADP. The catalysed reaction is [glutamine synthetase]-L-tyrosine + ATP = [glutamine synthetase]-O(4)-(5'-adenylyl)-L-tyrosine + diphosphate. Involved in the regulation of glutamine synthetase GlnA, a key enzyme in the process to assimilate ammonia. When cellular nitrogen levels are high, the C-terminal adenylyl transferase (AT) inactivates GlnA by covalent transfer of an adenylyl group from ATP to specific tyrosine residue of GlnA, thus reducing its activity. Conversely, when nitrogen levels are low, the N-terminal adenylyl removase (AR) activates GlnA by removing the adenylyl group by phosphorolysis, increasing its activity. The regulatory region of GlnE binds the signal transduction protein PII (GlnB) which indicates the nitrogen status of the cell. This is Bifunctional glutamine synthetase adenylyltransferase/adenylyl-removing enzyme from Bartonella quintana (strain Toulouse) (Rochalimaea quintana).